Reading from the N-terminus, the 440-residue chain is Adenylosuccinate synthetase 1, chloroplastic (440 aa).

GTP contacts are provided by residues 13–19 and 41–43; these read GDEGKGK and GHT. Catalysis depends on D14, which acts as the Proton acceptor. The Mg(2+) site is built by D14 and G41. IMP is bound by residues 14–17, 39–42, T135, R149, Q230, T245, and R313; these read DEGK and NAGH. H42 functions as the Proton donor in the catalytic mechanism. 309-315 lines the substrate pocket; sequence TVTRRKR. Residues R315 and 341–343 each bind GTP; that span reads KLD.

Belongs to the adenylosuccinate synthetase family. In terms of assembly, homodimer. It depends on Mg(2+) as a cofactor.

The protein resides in the plastid. Its subcellular location is the chloroplast. The catalysed reaction is IMP + L-aspartate + GTP = N(6)-(1,2-dicarboxyethyl)-AMP + GDP + phosphate + 2 H(+). Its pathway is purine metabolism; AMP biosynthesis via de novo pathway; AMP from IMP: step 1/2. Its function is as follows. Plays an important role in the de novo pathway and in the salvage pathway of purine nucleotide biosynthesis. Catalyzes the first committed step in the biosynthesis of AMP from IMP. The sequence is that of Adenylosuccinate synthetase 1, chloroplastic from Ricinus communis (Castor bean).